Here is a 95-residue protein sequence, read N- to C-terminus: Large ribosomal subunit protein bL25 (95 aa).

It belongs to the bacterial ribosomal protein bL25 family. In terms of assembly, part of the 50S ribosomal subunit; part of the 5S rRNA/L5/L18/L25 subcomplex. Contacts the 5S rRNA. Binds to the 5S rRNA independently of L5 and L18.

In terms of biological role, this is one of the proteins that binds to the 5S RNA in the ribosome where it forms part of the central protuberance. This Haemophilus ducreyi (strain 35000HP / ATCC 700724) protein is Large ribosomal subunit protein bL25.